Here is a 180-residue protein sequence, read N- to C-terminus: Flavodoxin 2 (180 aa).

In terms of domain architecture, Flavodoxin-like spans 4 to 173 (IGLFFGSNTG…RVAAWLAQIA (170 aa)). Residues 10-15 (SNTGKT), threonine 57, glycine 61, aspartate 99, 106-108 (NYL), and aspartate 155 contribute to the FMN site.

The cofactor is FMN.

Functionally, flavodoxins are low-potential electron donors to a number of redox enzymes. NifF is the electron donor to nitrogenase, and is thus implicated in nitrogen fixation. Does not function as an electron donor to nitrite reductase. This is Flavodoxin 2 from Azotobacter vinelandii.